The sequence spans 210 residues: Chorismate pyruvate-lyase (210 aa).

It belongs to the chorismate pyruvate-lyase type 2 family.

It catalyses the reaction chorismate = 4-hydroxybenzoate + pyruvate. Functionally, removes the pyruvyl group from chorismate to provide 4-hydroxybenzoate (4HB). Involved in the synthesis of glycosylated p-hydroxybenzoic acid methyl esters (p-HBADs) and phenolic glycolipids (PGL) that play important roles in the pathogenesis of mycobacterial infections. The sequence is that of Chorismate pyruvate-lyase from Mycobacterium leprae (strain TN).